Consider the following 342-residue polypeptide: Oxygen-dependent coproporphyrinogen-III oxidase (342 aa).

Serine 98 contributes to the substrate binding site. A divalent metal cation is bound by residues histidine 102 and histidine 112. The Proton donor role is filled by histidine 112. 114–116 (NYR) is a binding site for substrate. A divalent metal cation contacts are provided by histidine 146 and histidine 176. Positions 266–301 (YVEFNLVWDRGTIFGLQTNGRTESILMSLPPLARWE) are important for dimerization.

It belongs to the aerobic coproporphyrinogen-III oxidase family. Homodimer. A divalent metal cation is required as a cofactor.

It localises to the cytoplasm. It catalyses the reaction coproporphyrinogen III + O2 + 2 H(+) = protoporphyrinogen IX + 2 CO2 + 2 H2O. It functions in the pathway porphyrin-containing compound metabolism; protoporphyrin-IX biosynthesis; protoporphyrinogen-IX from coproporphyrinogen-III (O2 route): step 1/1. Functionally, involved in the heme and chlorophyll biosynthesis. Catalyzes the aerobic oxidative decarboxylation of propionate groups of rings A and B of coproporphyrinogen-III to yield the vinyl groups in protoporphyrinogen-IX. This chain is Oxygen-dependent coproporphyrinogen-III oxidase, found in Prochlorococcus marinus (strain MIT 9301).